The following is a 286-amino-acid chain: Bifunctional protein FolD (286 aa).

Residues 165 to 167 (GRS), S190, and V231 contribute to the NADP(+) site.

Belongs to the tetrahydrofolate dehydrogenase/cyclohydrolase family. Homodimer.

It catalyses the reaction (6R)-5,10-methylene-5,6,7,8-tetrahydrofolate + NADP(+) = (6R)-5,10-methenyltetrahydrofolate + NADPH. The enzyme catalyses (6R)-5,10-methenyltetrahydrofolate + H2O = (6R)-10-formyltetrahydrofolate + H(+). It functions in the pathway one-carbon metabolism; tetrahydrofolate interconversion. Functionally, catalyzes the oxidation of 5,10-methylenetetrahydrofolate to 5,10-methenyltetrahydrofolate and then the hydrolysis of 5,10-methenyltetrahydrofolate to 10-formyltetrahydrofolate. The chain is Bifunctional protein FolD from Bacillus thuringiensis (strain Al Hakam).